The chain runs to 403 residues: Soluble calcium-activated nucleotidase 1 (403 aa).

Over 1-44 (MPIQPFDQREWNEPMHSLRISVGGLPVLASMTKATDPRFRPRWR) the chain is Cytoplasmic. A helical; Signal-anchor for type II membrane protein transmembrane segment spans residues 45–61 (VILTSFVGAALLWLLYS). The Lumenal segment spans residues 62–403 (HHQTPVSGRP…SVKYEGIEFI (342 aa)). Asn-90 is a glycosylation site (N-linked (GlcNAc...) asparagine). Ca(2+) is bound by residues Ser-170, Asp-171, Glu-217, Glu-286, Ser-347, and Glu-398.

This sequence belongs to the apyrase family. In terms of assembly, monomer. Homodimer; dimerization is Ca(2+)-dependent. It depends on Ca(2+) as a cofactor. In terms of tissue distribution, detected in intestine, thymus, heart, lung, spleen, kidney, liver, testis, skeletal muscle and brain.

Its subcellular location is the endoplasmic reticulum membrane. The protein resides in the golgi apparatus. It localises to the golgi stack membrane. It carries out the reaction a ribonucleoside 5'-diphosphate + H2O = a ribonucleoside 5'-phosphate + phosphate + H(+). Functionally, calcium-dependent nucleotidase with a preference for UDP. The order of activity with different substrates is UDP &gt; GDP &gt; IDP &gt;&gt; UTP &gt; CDP = GTP = ITP. Has very low activity towards ADP and even lower activity towards ATP. Does not hydrolyze AMP and GMP. Involved in proteoglycan synthesis. This Rattus norvegicus (Rat) protein is Soluble calcium-activated nucleotidase 1 (Cant1).